The sequence spans 210 residues: GRF1-interacting factor 1 (210 aa).

A compositionally biased stretch (low complexity) spans 135–152 (ATLQHQQLHHSQLGMSSS). The disordered stretch occupies residues 135-210 (ATLQHQQLHH…LYLKSSDDGN (76 aa)). The segment covering 182-198 (GSGGGGEGRGGSSGDGG) has biased composition (gly residues).

It belongs to the SS18 family. As to quaternary structure, interacts with GRF1, GRF2, GRF5 and GRF9. Strongly expressed in actively growing and developing tissues, such as roots, upper stems, and shoot tips and flower buds. Also expressed in mature flowers. Not expressed in the shoot apical meristem (SAM). Highly accumulated in the proximal part of leaf primordia, in the key proliferative zone at the junction region between the leaf blade and leaf petiole.

In terms of biological role, transcription coactivator that plays a role in the regulation of cell expansion in leaf and cotyledons tissues. Component of a network formed by miR396, the GRFs and their interacting factors (GIFs) acting in the regulation of meristem function, at least partially through the control of cell proliferation. Appears to function synergistically with GRF1 as a transcriptional coactivator. Acts together with GRF5 for the development of appropriate leaf size and shape through the promotion and/or maintenance of cell proliferation activity in leaf primordia. Plays a role in adaxial/abaxial patterning and growth in leaf morphogenesis. GIFs are involved in the positive regulation of cell proliferation of lateral organs in a functionally redundant manner. Together with GATA18/HAN, mediates cotyledon identity by preventing ectopic root formation through the repression of PLT1 expression. The protein is GRF1-interacting factor 1 of Arabidopsis thaliana (Mouse-ear cress).